The chain runs to 409 residues: AP-1-like transcription factor YAP2 (409 aa).

2 consecutive short sequence motifs (bipartite nuclear localization signal) follow at residues 17 to 24 (MKKQMLLN) and 47 to 54 (SRRTAQNR). The disordered stretch occupies residues 26 to 64 (DGTPKRKVGRPGRKRIDSEAKSRRTAQNRAAQRAFRDRK). The 64-residue stretch at 43–106 (SEAKSRRTAQ…KSLLSEITKY (64 aa)) folds into the bZIP domain. The segment at 46 to 69 (KSRRTAQNRAAQRAFRDRKEAKMK) is basic motif. The segment at 71 to 99 (LQERVELLEQKDAQNKTTTDFLLCSLKSL) is leucine-zipper. Residues 127–156 (QKRENEKGTSTAVSKAAKELPSPNSDENMT) form a disordered region. Positions 356 to 387 (CYHILEEISSLPKYSSLDIDDLCSELIIKAKC) are c-CRD. The short motif at 372 to 379 (LDIDDLCS) is the Nuclear export signal element.

Belongs to the bZIP family. YAP subfamily. In terms of assembly, homodimer; disulfide-linked, upon oxidation. Interacts in the nucleus with the nuclear export protein CRM1. Interacts with RCK1. Depending on the oxidative stress inducing agent, CAD1/YAP2 can undergo two distinct conformational changes, both through oxidation of cysteine residues, and both masking the nuclear export signal, thus abolishing nuclear export by CRM1/exportin 1. Peroxide stress induces the formation of possible intramolecular disulfide bonds as well as intermolcular disulfide within a homodimer. Cadmium may bind directly to specific cysteine residues (Cys-391 and either Cys-356 or Cys-387) in the c-CRD.

The protein localises to the cytoplasm. It localises to the nucleus. Functionally, transcription activator involved in oxidative stress response and cadmium resistance. Regulates the transcription of genes overrepresented for the function of stabilizing proteins including the inducible Hsp90-family protein HSP82. Preferentially binds to promoters with the core binding site 5'-TTA[CG]TAA-3'. Activity of the transcription factor is controlled through oxidation of specific cysteine residues resulting in the alteration of its subcellular location. Activation by alkyl hydroperoxides or cadmium induces nuclear accumulation and as a result CAD1/YAP2 transcriptional activity. The chain is AP-1-like transcription factor YAP2 from Saccharomyces cerevisiae (strain ATCC 204508 / S288c) (Baker's yeast).